The following is a 304-amino-acid chain: Ribonuclease BN (304 aa).

The Zn(2+) site is built by His63, His65, Asp67, His68, His140, Asp211, and His269. The Proton acceptor role is filled by Asp67.

It belongs to the RNase Z family. RNase BN subfamily. As to quaternary structure, homodimer. Zn(2+) is required as a cofactor.

Zinc phosphodiesterase, which has both exoribonuclease and endoribonuclease activities. The polypeptide is Ribonuclease BN (Erwinia tasmaniensis (strain DSM 17950 / CFBP 7177 / CIP 109463 / NCPPB 4357 / Et1/99)).